We begin with the raw amino-acid sequence, 428 residues long: Gamma-glutamyl phosphate reductase (428 aa).

It belongs to the gamma-glutamyl phosphate reductase family.

It is found in the cytoplasm. It catalyses the reaction L-glutamate 5-semialdehyde + phosphate + NADP(+) = L-glutamyl 5-phosphate + NADPH + H(+). Its pathway is amino-acid biosynthesis; L-proline biosynthesis; L-glutamate 5-semialdehyde from L-glutamate: step 2/2. Its function is as follows. Catalyzes the NADPH-dependent reduction of L-glutamate 5-phosphate into L-glutamate 5-semialdehyde and phosphate. The product spontaneously undergoes cyclization to form 1-pyrroline-5-carboxylate. The sequence is that of Gamma-glutamyl phosphate reductase from Streptomyces coelicolor (strain ATCC BAA-471 / A3(2) / M145).